We begin with the raw amino-acid sequence, 453 residues long: Ribosome biogenesis protein YTM1 (453 aa).

The tract at residues 8 to 89 (VKLRFFTREQ…ETFLNVEYTR (82 aa)) is ubiquitin-like (UBL) domain. The tract at residues 99–453 (SFSNEDWVSS…INKGDNIFKS (355 aa)) is sufficient for interaction with ERB1 and association with 66S pre-ribosomes. 7 WD repeats span residues 101 to 139 (SNEDWVSSLDVGDNNKIISGSYDGVVRTWNLSGKIEKQY), 141 to 179 (GHSAPIRAVKYISNTRMVSGGNDRTLRLWKTKNEDLKQP), 199 to 237 (GHKAPVVSIDVSDNSRILSGSYDNTIGFWSTIYKEMTVV), 278 to 318 (SHTG…CIDT), 320 to 359 (TTSYSLLSLAQLPTLNLLACGSSARHITLHDPRIGSTSKI), 366 to 406 (GHKN…PMYT), and 417 to 453 (GVNDKVFAVNWSKNVGIISAGQDKKIQINKGDNIFKS).

Belongs to the WD repeat WDR12/YTM1 family. In terms of assembly, component of the NOP7 complex, composed of ERB1, NOP7 and YTM1. The complex is held together by ERB1, which interacts with NOP7 via its N-terminal domain and with YTM1 via a high-affinity interaction between the seven-bladed beta-propeller domains of the 2 proteins. The NOP7 complex associates with the 66S pre-ribosome. Interacts (via UBL domain) with MDN1 (via VWFA/MIDAS domain).

The protein resides in the nucleus. It localises to the nucleolus. It is found in the nucleoplasm. Component of the NOP7 complex, which is required for maturation of the 25S and 5.8S ribosomal RNAs and formation of the 60S ribosome. This Vanderwaltozyma polyspora (strain ATCC 22028 / DSM 70294 / BCRC 21397 / CBS 2163 / NBRC 10782 / NRRL Y-8283 / UCD 57-17) (Kluyveromyces polysporus) protein is Ribosome biogenesis protein YTM1.